The primary structure comprises 184 residues: Peptide deformylase (184 aa).

Positions 111 and 154 each coordinate Fe cation. Glu-155 is a catalytic residue. His-158 is a binding site for Fe cation.

This sequence belongs to the polypeptide deformylase family. Requires Fe(2+) as cofactor.

It carries out the reaction N-terminal N-formyl-L-methionyl-[peptide] + H2O = N-terminal L-methionyl-[peptide] + formate. Removes the formyl group from the N-terminal Met of newly synthesized proteins. Requires at least a dipeptide for an efficient rate of reaction. N-terminal L-methionine is a prerequisite for activity but the enzyme has broad specificity at other positions. The chain is Peptide deformylase from Lacticaseibacillus casei (strain BL23) (Lactobacillus casei).